The primary structure comprises 426 residues: Glutamate-1-semialdehyde 2,1-aminomutase (426 aa).

N6-(pyridoxal phosphate)lysine is present on Lys-263.

The protein belongs to the class-III pyridoxal-phosphate-dependent aminotransferase family. HemL subfamily. In terms of assembly, homodimer. Requires pyridoxal 5'-phosphate as cofactor.

The protein resides in the cytoplasm. It catalyses the reaction (S)-4-amino-5-oxopentanoate = 5-aminolevulinate. It functions in the pathway porphyrin-containing compound metabolism; protoporphyrin-IX biosynthesis; 5-aminolevulinate from L-glutamyl-tRNA(Glu): step 2/2. The protein is Glutamate-1-semialdehyde 2,1-aminomutase of Caldicellulosiruptor bescii (strain ATCC BAA-1888 / DSM 6725 / KCTC 15123 / Z-1320) (Anaerocellum thermophilum).